The chain runs to 299 residues: tRNA dimethylallyltransferase (299 aa).

10-17 (GPTAVGKT) is a binding site for ATP. 12-17 (TAVGKT) contacts substrate. The interval 35-38 (DSQQ) is interaction with substrate tRNA.

Belongs to the IPP transferase family. As to quaternary structure, monomer. Requires Mg(2+) as cofactor.

It carries out the reaction adenosine(37) in tRNA + dimethylallyl diphosphate = N(6)-dimethylallyladenosine(37) in tRNA + diphosphate. In terms of biological role, catalyzes the transfer of a dimethylallyl group onto the adenine at position 37 in tRNAs that read codons beginning with uridine, leading to the formation of N6-(dimethylallyl)adenosine (i(6)A). In Streptococcus thermophilus (strain ATCC BAA-491 / LMD-9), this protein is tRNA dimethylallyltransferase.